The sequence spans 668 residues: UvrABC system protein B (668 aa).

In terms of domain architecture, Helicase ATP-binding spans 31 to 416 (QGITDGVPAQ…RGHIIEQIIR (386 aa)). An ATP-binding site is contributed by 44–51 (GTTGSGKT). The Beta-hairpin signature appears at 97–120 (YYDYYQPEAYIARSDTYIEKSLLI). The region spanning 433-596 (QIDDLLEEIR…ITPQPIIKPI (164 aa)) is the Helicase C-terminal domain. Residues 621-656 (EASIKTYEEAMYQAAQEFQFDEAAKYRDLMNAAKKQ) enclose the UVR domain.

Belongs to the UvrB family. Forms a heterotetramer with UvrA during the search for lesions. Interacts with UvrC in an incision complex.

It localises to the cytoplasm. Its function is as follows. The UvrABC repair system catalyzes the recognition and processing of DNA lesions. A damage recognition complex composed of 2 UvrA and 2 UvrB subunits scans DNA for abnormalities. Upon binding of the UvrA(2)B(2) complex to a putative damaged site, the DNA wraps around one UvrB monomer. DNA wrap is dependent on ATP binding by UvrB and probably causes local melting of the DNA helix, facilitating insertion of UvrB beta-hairpin between the DNA strands. Then UvrB probes one DNA strand for the presence of a lesion. If a lesion is found the UvrA subunits dissociate and the UvrB-DNA preincision complex is formed. This complex is subsequently bound by UvrC and the second UvrB is released. If no lesion is found, the DNA wraps around the other UvrB subunit that will check the other stand for damage. This Chlamydia trachomatis serovar D (strain ATCC VR-885 / DSM 19411 / UW-3/Cx) protein is UvrABC system protein B.